The primary structure comprises 725 residues: Kinesin-like protein KIN-8A (725 aa).

A disordered region spans residues 1-32; sequence MPVSTRSKVMKQERNEQENTNLNLPLRNPHQG. The Kinesin motor domain occupies 151–481; it reads RILVFVRLRP…LHWADRAKEI (331 aa). Residue 243–250 participates in ATP binding; the sequence is GATGAGKT. Coiled coils occupy residues 499–541 and 583–617; these read EGAD…AANN and ESLKRTKAEEAVKELQLTVKALKMEMERMKREHGL. Disordered stretches follow at residues 652-672 and 691-725; these read GSLRPKEKEKELKSPSHRFAS and SPALDRRKTRSHGLVHQEAPSKLLQPGFARPHMKH. Residues 655–665 are compositionally biased toward basic and acidic residues; the sequence is RPKEKEKELKS.

The protein belongs to the TRAFAC class myosin-kinesin ATPase superfamily. Kinesin family. KIN-8 subfamily.

The sequence is that of Kinesin-like protein KIN-8A from Arabidopsis thaliana (Mouse-ear cress).